The chain runs to 1027 residues: Cysteine-rich motor neuron 1 protein (1027 aa).

An N-terminal signal peptide occupies residues 1–28; the sequence is MASSRMYLLVKCMLILQLMVLIAKNSRA. The IGFBP N-terminal domain maps to 29–106; the sequence is LICLPCDKSK…QYEVGNCEDE (78 aa). Over 29–931 the chain is Extracellular; that stretch reads LICLPCDKSK…PLPSEDAGLH (903 aa). Disulfide bonds link cysteine 31/cysteine 54, cysteine 34/cysteine 56, cysteine 39/cysteine 57, and cysteine 45/cysteine 60. N-linked (GlcNAc...) asparagine glycosylation is present at asparagine 65. 2 cysteine pairs are disulfide-bonded: cysteine 68/cysteine 84 and cysteine 78/cysteine 103. A Cell attachment site motif is present at residues 308-310; it reads RGD. N-linked (GlcNAc...) asparagine glycosylation is present at asparagine 324. 2 VWFC domains span residues 328–385 and 395–451; these read PACT…PVCE and AGCY…PVCE. Antistasin-like domains follow at residues 463 to 492, 499 to 526, 533 to 558, and 561 to 586; these read CGSLDNCTLLEQSCAFGFRLDPSGCRTCAC, CGGLMASCTLKCPFGFQTDIHGCDVCQC, CKAVACAKDCPFGYIKNKHGCDTCRC, and CPELPCDKACPMGFQHDELGCLICQC. Asparagine 468 carries N-linked (GlcNAc...) asparagine glycosylation. VWFC domains lie at 601-658 and 672-730; these read GSCL…PTCP and SVCL…PHCP. Residue asparagine 741 is glycosylated (N-linked (GlcNAc...) asparagine). VWFC domains follow at residues 746–804 and 810–867; these read SYCR…PYCL and AVCH…PMCP. The interval 877 to 897 is disordered; the sequence is IEKTDQRGDKSRHQPAWPTHS. A compositionally biased stretch (basic and acidic residues) spans 878 to 888; it reads EKTDQRGDKSR. Positions 883–885 match the Cell attachment site motif; the sequence is RGD. A helical membrane pass occupies residues 932-952; it reads WAWVALPVLMMMLTLAALLLV. Over 953-1027 the chain is Cytoplasmic; the sequence is NQRKQWIPVP…LQADNFYQTA (75 aa).

Its subcellular location is the membrane. In terms of biological role, may play a role in CNS development by interacting with growth factors implicated in motor neuron differentiation and survival. This chain is Cysteine-rich motor neuron 1 protein (crim1), found in Danio rerio (Zebrafish).